A 122-amino-acid chain; its full sequence is Large ribosomal subunit protein uL14 (122 aa).

This sequence belongs to the universal ribosomal protein uL14 family. As to quaternary structure, part of the 50S ribosomal subunit. Forms a cluster with proteins L3 and L19. In the 70S ribosome, L14 and L19 interact and together make contacts with the 16S rRNA in bridges B5 and B8.

In terms of biological role, binds to 23S rRNA. Forms part of two intersubunit bridges in the 70S ribosome. The sequence is that of Large ribosomal subunit protein uL14 from Halothermothrix orenii (strain H 168 / OCM 544 / DSM 9562).